A 577-amino-acid polypeptide reads, in one-letter code: Outer spore wall assembly protein SHE10 (577 aa).

An N-terminal signal peptide occupies residues 1–23; sequence MGKLIKLITTLTVLVSLLQYCCE. 2 coiled-coil regions span residues 379–416 and 513–561; these read NETR…ENVE and ILRS…EEDV. Over residues 525–545 the composition is skewed to basic and acidic residues; sequence RERKERERKEREKAAAEEFQR. Residues 525-577 are disordered; sequence RERKERERKEREKAAAEEFQRQQELLLQQEEEDEEDVSYTSTSTITTTTTMTL. Over residues 562-577 the composition is skewed to low complexity; it reads SYTSTSTITTTTTMTL.

This sequence belongs to the SHE10 family. Component of the mitochondria-localized RNase mitochondrial RNA-processing (RNase MRP) composed of one single RNA encoded by the NME1 gene and at least 31 proteins. Absent in the nucleus-localized RNase MRP (NuMRP).

The protein localises to the mitochondrion. Functionally, involved in spore wall assembly. May be a component of the mitochondrial RNase MRP (MtMRP), a ribonucleoprotein endoribonuclease involved in the cleaving RNA transcripts to generate primers for DNA replication in mitochondria. This is Outer spore wall assembly protein SHE10 from Saccharomyces cerevisiae (strain RM11-1a) (Baker's yeast).